The following is a 340-amino-acid chain: Eukaryotic translation initiation factor 3 subunit I (340 aa).

WD repeat units follow at residues 8-47 (GHER…RLGT), 50-91 (GHQG…KVWD), 150-189 (CTES…QLEN), 194-233 (EFDH…ILKT), and 291-330 (GHFG…FDFM).

Belongs to the eIF-3 subunit I family. Component of the eukaryotic translation initiation factor 3 (eIF-3) complex.

Its subcellular location is the cytoplasm. In terms of biological role, component of the eukaryotic translation initiation factor 3 (eIF-3) complex, which is involved in protein synthesis of a specialized repertoire of mRNAs and, together with other initiation factors, stimulates binding of mRNA and methionyl-tRNAi to the 40S ribosome. The eIF-3 complex specifically targets and initiates translation of a subset of mRNAs involved in cell proliferation. The polypeptide is Eukaryotic translation initiation factor 3 subunit I (tif34) (Aspergillus fumigatus (strain CBS 144.89 / FGSC A1163 / CEA10) (Neosartorya fumigata)).